Consider the following 47-residue polypeptide: Short neurotoxin D2A (47 aa).

2 disulfide bridges follow: Cys-3–Cys-24 and Cys-17–Cys-39.

Expressed by the venom gland.

The protein resides in the secreted. The sequence is that of Short neurotoxin D2A from Micrurus pyrrhocryptus (Coral snake).